The chain runs to 544 residues: CTP synthase (544 aa).

The tract at residues 1-265 is amidoligase domain; sequence MTKFIFVTGG…DNIITEQLQL (265 aa). Serine 13 lines the CTP pocket. Serine 13 contacts UTP. ATP is bound by residues 14–19 and aspartate 71; that span reads SLGKGI. 2 residues coordinate Mg(2+): aspartate 71 and glutamate 139. CTP-binding positions include 146-148, 186-191, and lysine 222; these read DIE and KTKPTQ. Residues 186–191 and lysine 222 contribute to the UTP site; that span reads KTKPTQ. The Glutamine amidotransferase type-1 domain maps to 290–544; sequence KIAMVGKYVD…VKAALNNKKA (255 aa). Residue glycine 353 participates in L-glutamine binding. Cysteine 380 functions as the Nucleophile; for glutamine hydrolysis in the catalytic mechanism. L-glutamine is bound by residues 381 to 384, glutamate 404, and arginine 471; that span reads LGMQ. Active-site residues include histidine 517 and glutamate 519.

This sequence belongs to the CTP synthase family. Homotetramer.

It catalyses the reaction UTP + L-glutamine + ATP + H2O = CTP + L-glutamate + ADP + phosphate + 2 H(+). The catalysed reaction is L-glutamine + H2O = L-glutamate + NH4(+). It carries out the reaction UTP + NH4(+) + ATP = CTP + ADP + phosphate + 2 H(+). The protein operates within pyrimidine metabolism; CTP biosynthesis via de novo pathway; CTP from UDP: step 2/2. With respect to regulation, allosterically activated by GTP, when glutamine is the substrate; GTP has no effect on the reaction when ammonia is the substrate. The allosteric effector GTP functions by stabilizing the protein conformation that binds the tetrahedral intermediate(s) formed during glutamine hydrolysis. Inhibited by the product CTP, via allosteric rather than competitive inhibition. Functionally, catalyzes the ATP-dependent amination of UTP to CTP with either L-glutamine or ammonia as the source of nitrogen. Regulates intracellular CTP levels through interactions with the four ribonucleotide triphosphates. The sequence is that of CTP synthase from Neisseria meningitidis serogroup C (strain 053442).